Reading from the N-terminus, the 359-residue chain is Elongation factor Ts 1, mitochondrial (359 aa).

Positions 323–341 (GKAAPAPKAEEPAAVAPAK) are enriched in low complexity. Residues 323–345 (GKAAPAPKAEEPAAVAPAKADAE) are disordered.

Belongs to the EF-Ts family.

The protein resides in the mitochondrion. Its function is as follows. Associates with the EF-Tu.GDP complex and induces the exchange of GDP to GTP. It remains bound to the aminoacyl-tRNA.EF-Tu.GTP complex up to the GTP hydrolysis stage on the ribosome. This chain is Elongation factor Ts 1, mitochondrial, found in Thalassiosira pseudonana (Marine diatom).